Consider the following 1172-residue polypeptide: MEESPPKQKSNTKVAQHEGQQDLNTTRHMNVELKHRPKLERHLKLGMIPVVYMKQREEILYPAQSLKEENLIQNFTSLPLLQKLYPKDPENMVRKSWASCIPEEGGHMINIQDLFGPNIGTQKEPQLVIIEGAAGIGKSTLARLVKRAWKEGQLYRDHFQHVFFFSCRELAQCKKLSLAELIAQGQEVPTAPINQILSHPEKLLFILDGIDEPAWVLADQNPELCLHWSQRQPVHTLLGSLLGKSILPEAFFLLTTRTTALQKFIPSLPMPCQVEVLGFSGIERENYFYKYFANQRHAITAFMMVESNPVLLTLCEVPWVCWLVCTCLKKQMEQGRVLSLKSQTTTALCLKYPSLTIPDKHRRTQVKALCSLAAEGIWKRRTLFSESDLCKQGLDEDAVATFLKTGVLQKQASSLSYSFAHLCLQEFFAAISCILEDSEERHGNMEMDRIVETLVERYGRQNLFEAPTVRFLFGLLGKEGVKGMEKLFSCSLHGKTKLKLLWHILGKSQPHQPSCLGLLHCLYENQDMELLTHVMHDLQGTIVPGPNDIAHTVLQTNVKQLVVQTDMELMVATFCIQFYCHVRTLQLNMEKQQGYALTSPRMVLYRWTPITNASWEILFYNLKFTRNLEGLDLSGNSLRYSVVQSLCNTLRYPGCQLKTLWLVKCGLTSRYCSLLASVLSAHSSLTELYLQLNDLGDDGVRMLCEGLRNPVCNLSILWLDLSSLSAQVITELRTLEEKNPKLYIRSIWMPHMMVPTENMDEEAILTTFKQQRQESGDKPMEILGTEEDFWGPTGPVATELVDRVRNLYRVQLPMAGSYHCPSTGLHFVVTRAVTIEIEFCAWSQFLDKTPLQQSHMVVGPLFDIKAEQGAVTAVYLPHFVSLKDTEASTFDFKVAHFQEHGIVLETPDRVKPGYTVLKNPSFSPMGDVLRIIPADRHFIPITSITLIYYRLNLEEVTLHLYLVPSDCTIQKAIDDEEMKFQFVRINKPPPVDNLFIGSRYIVSGSENLEITPKELELCYRSSKEFQLFSEIYVGNMGSEIKLQIKNKKHMRLIWEALLKPGDLRPALPRIAQALKDAPSLLHFMDQHREQLVARVTSVDPLLDKLHGLVLNEESYEAVRAENTNQDKMRKLFNLSRSWSRACKDLFYQALKETHPHLVMDLLEKSGGVSLGS.

The disordered stretch occupies residues 1-22; the sequence is MEESPPKQKSNTKVAQHEGQQD. In terms of domain architecture, NACHT spans 126–435; that stretch reads QLVIIEGAAG…EFFAAISCIL (310 aa). 132-139 contacts ATP; that stretch reads GAAGIGKS. 2 LRR repeats span residues 627–647 and 684–704; these read NLEG…QSLC and SLTE…RMLC. The interval 789 to 922 is ZU5; that stretch reads FWGPTGPVAT…GYTVLKNPSF (134 aa). The 284-residue stretch at 789–1072 folds into the FIIND domain; the sequence is FWGPTGPVAT…LRPALPRIAQ (284 aa). A UPA region spans residues 923 to 1072; sequence SPMGDVLRII…LRPALPRIAQ (150 aa). The 84-residue stretch at 1082–1165 folds into the CARD domain; that stretch reads HFMDQHREQL…HLVMDLLEKS (84 aa).

This sequence belongs to the NLRP family. In contrast to allele 1 and 2, not able to mediate autocatalytic cleavage. Expressed in macrophages.

It localises to the cytoplasm. The protein localises to the cytosol. In contrast to allele 1, does not undergo autocatalytic cleavage within the FIIND domain and its mode of activation remains unclear. In contrast to alleles 1 and 2, allele 3 is not activated by Val-boroPro (Talabostat, PT-100). Not activated by cleavage by B.anthracis lethal toxin (LT) endopeptidase. Not activated by metabolic inhibitors, such as 2-deoxy-D-glucose and sodium azide. Its function is as follows. May act as the sensor component of the Nlrp1b inflammasome, which mediates inflammasome activation in response to various pathogen-associated signals, leading to subsequent pyroptosis. Inflammasomes are supramolecular complexes that assemble in the cytosol in response to pathogens and other damage-associated signals and play critical roles in innate immunity and inflammation. May act as a recognition receptor (PRR), which recognizes specific pathogens and other damage-associated signals and forms an inflammasome complex: the inflammasome directly recruits pro-caspase-1 (proCASP1) independently of PYCARD/ASC and promotes caspase-1 (CASP1) activation, which subsequently cleaves and activates inflammatory cytokines IL1B and IL18 and gasdermin-D (GSDMD), leading to pyroptosis. In the absence of GSDMD expression, the Nlrp1b inflammasome is able to recruit and activate CASP8, leading to activation of gasdermin-E (GSDME). Contrary to Nlrp1b allele 1, allele 3 is not activated by Bacillus anthracis lethal toxin. The absence of autocatalytic cleavage within the FIIND domain, which regulates activation in other alleles, suggests that allele 3 may be non-functional. This chain is NACHT, LRR and PYD domains-containing protein 1b allele 3, found in Mus musculus (Mouse).